Consider the following 356-residue polypeptide: Protein-arginine kinase (356 aa).

One can recognise a Phosphagen kinase C-terminal domain in the interval 24-254 (IVLSTRIRLA…HQLIQQEKAA (231 aa)). Residues 27 to 31 (STRIR), histidine 92, arginine 125, 176 to 180 (RASVM), and 207 to 212 (RGIYGE) each bind ATP. The short motif at 337-342 (RDYRRA) is the RDXXRA motif of the pArg binding pocket involved in allosteric regulation element.

This sequence belongs to the ATP:guanido phosphotransferase family.

It catalyses the reaction L-arginyl-[protein] + ATP = N(omega)-phospho-L-arginyl-[protein] + ADP + H(+). Appears to be allosterically activated by the binding of pArg-containing polypeptides to the pArg-binding pocket localized in the C-terminal domain of McsB. Catalyzes the specific phosphorylation of arginine residues in a large number of proteins. Is part of the bacterial stress response system. Protein arginine phosphorylation has a physiologically important role and is involved in the regulation of many critical cellular processes, such as protein homeostasis, motility, competence, and stringent and stress responses, by regulating gene expression and protein activity. The sequence is that of Protein-arginine kinase from Bacillus cytotoxicus (strain DSM 22905 / CIP 110041 / 391-98 / NVH 391-98).